We begin with the raw amino-acid sequence, 1108 residues long: Mediator of RNA polymerase II transcription subunit 14 (1108 aa).

Disordered stretches follow at residues 1-30 (MAAVMMNGVGPDGAMKPNLDQKLNNHGGDT), 35-54 (SSEIVQQQTPARSLQSDNPL), and 1048-1108 (QQQR…VDLT). Over residues 35-52 (SSEIVQQQTPARSLQSDN) the composition is skewed to polar residues. Positions 1048–1080 (QQQRQPVVQPGQQPQVQNQANGVMNRGPQRPGL) are enriched in low complexity.

It belongs to the Mediator complex subunit 14 family. Component of the Mediator complex.

The protein localises to the nucleus. Functionally, component of the Mediator complex, a coactivator involved in the regulated transcription of nearly all RNA polymerase II-dependent genes. Mediator functions as a bridge to convey information from gene-specific regulatory proteins to the basal RNA polymerase II transcription machinery. Mediator is recruited to promoters by direct interactions with regulatory proteins and serves as a scaffold for the assembly of a functional preinitiation complex with RNA polymerase II and the general transcription factors. In Pyricularia oryzae (strain 70-15 / ATCC MYA-4617 / FGSC 8958) (Rice blast fungus), this protein is Mediator of RNA polymerase II transcription subunit 14 (RGR1).